Here is a 162-residue protein sequence, read N- to C-terminus: Autophagy-related protein 8 (162 aa).

Residues 1 to 27 (MRSKFKDEHPFEKRKAEAERIRQKYSD) are compositionally biased toward basic and acidic residues. The tract at residues 1 to 42 (MRSKFKDEHPFEKRKAEAERIRQKYSDRIPPSPHSPASRLIG) is disordered. Gly-157 is lipidated: Phosphatidylethanolamine amidated glycine. A propeptide spans 158-162 (GFETA) (removed in mature form).

It belongs to the ATG8 family.

It is found in the cytoplasmic vesicle. Its subcellular location is the autophagosome membrane. The protein resides in the vacuole membrane. Its function is as follows. Ubiquitin-like modifier involved in autophagosome formation. With ATG4, mediates the delivery of the autophagosomes to the vacuole via the microtubule cytoskeleton. Required for selective autophagic degradation of the nucleus (nucleophagy) as well as for mitophagy which contributes to regulate mitochondrial quantity and quality by eliminating the mitochondria to a basal level to fulfill cellular energy requirements and preventing excess ROS production. Also participates in membrane fusion events that take place in the early secretory pathway. Also involved in endoplasmic reticulum-specific autophagic process and is essential for the survival of cells subjected to severe ER stress. The ATG8-PE conjugate mediates tethering between adjacent membranes and stimulates membrane hemifusion, leading to expansion of the autophagosomal membrane during autophagy. In Colletotrichum higginsianum (strain IMI 349063) (Crucifer anthracnose fungus), this protein is Autophagy-related protein 8.